The chain runs to 73 residues: UPF0435 protein OB1527 (73 aa).

It belongs to the UPF0435 family.

The sequence is that of UPF0435 protein OB1527 from Oceanobacillus iheyensis (strain DSM 14371 / CIP 107618 / JCM 11309 / KCTC 3954 / HTE831).